The chain runs to 219 residues: PRELI domain-containing protein 1, mitochondrial (219 aa).

A PRELI/MSF1 domain is found at 36–174; that stretch reads TEDIVHREVT…ILAKLQGEAP (139 aa).

As to quaternary structure, forms a complex with TRIAP1 in the mitochondrion intermembrane space. Interacts with OPA1 and AIFM1.

The protein resides in the mitochondrion. It is found in the mitochondrion intermembrane space. It carries out the reaction a 1,2-diacyl-sn-glycero-3-phosphate(in) = a 1,2-diacyl-sn-glycero-3-phosphate(out). Involved in the modulation of the mitochondrial apoptotic pathway by ensuring the accumulation of cardiolipin (CL) in mitochondrial membranes. In vitro, the TRIAP1:PRELID1 complex mediates the transfer of phosphatidic acid (PA) between liposomes and probably functions as a PA transporter across the mitochondrion intermembrane space to provide PA for CL synthesis in the inner membrane. Regulates the mitochondrial apoptotic pathway in primary Th cells. Regulates Th cell differentiation by down-regulating STAT6 thereby reducing IL-4-induced Th2 cell number. May be important for the development of vital and immunocompetent organs. The chain is PRELI domain-containing protein 1, mitochondrial (PRELID1) from Bos taurus (Bovine).